A 141-amino-acid chain; its full sequence is Small ribosomal subunit protein uS8c (141 aa).

It belongs to the universal ribosomal protein uS8 family. As to quaternary structure, part of the 30S ribosomal subunit.

Its subcellular location is the plastid. It is found in the chloroplast. In terms of biological role, one of the primary rRNA binding proteins, it binds directly to 16S rRNA central domain where it helps coordinate assembly of the platform of the 30S subunit. This chain is Small ribosomal subunit protein uS8c (rps8), found in Pleurastrum terricola (Filamentous green alga).